The sequence spans 380 residues: Alcohol dehydrogenase-like 4 (380 aa).

The Zn(2+) site is built by Cys47, Thr49, His70, Cys100, Cys103, Cys106, Cys114, and Cys180. An alcohol-binding residues include Thr49 and His70. Thr49 contributes to the NAD(+) binding site. NAD(+) is bound by residues 205–210, Asp229, Lys234, 298–300, Phe325, and Arg375; these read GLGAVG and LGV.

The protein belongs to the zinc-containing alcohol dehydrogenase family. Class-III subfamily. In terms of assembly, homodimer. Requires Zn(2+) as cofactor.

The protein resides in the cytoplasm. The enzyme catalyses a primary alcohol + NAD(+) = an aldehyde + NADH + H(+). It carries out the reaction a secondary alcohol + NAD(+) = a ketone + NADH + H(+). The protein is Alcohol dehydrogenase-like 4 of Arabidopsis thaliana (Mouse-ear cress).